We begin with the raw amino-acid sequence, 214 residues long: Large ribosomal subunit protein uL16 (214 aa).

Arg32 is subject to Citrulline. Lys175 participates in a covalent cross-link: Glycyl lysine isopeptide (Lys-Gly) (interchain with G-Cter in SUMO2). Lys188 participates in a covalent cross-link: Glycyl lysine isopeptide (Lys-Gly) (interchain with G-Cter in ubiquitin).

This sequence belongs to the universal ribosomal protein uL16 family. Component of the large ribosomal subunit. Mature ribosomes consist of a small (40S) and a large (60S) subunit. The 40S subunit contains about 33 different proteins and 1 molecule of RNA (18S). The 60S subunit contains about 49 different proteins and 3 molecules of RNA (28S, 5.8S and 5S). In terms of processing, citrullinated by PADI4. Ufmylated by UFL1.

Its subcellular location is the cytoplasm. Component of the large ribosomal subunit. Plays a role in the formation of actively translating ribosomes. May play a role in the embryonic brain development. This Rattus norvegicus (Rat) protein is Large ribosomal subunit protein uL16.